A 450-amino-acid chain; its full sequence is CBL-interacting protein kinase 23 (450 aa).

In terms of domain architecture, Protein kinase spans 13–268 (YELGRTLGEG…IAELINNEWF (256 aa)). ATP is bound by residues 19–27 (LGEGTFAKV) and K42. Residue D136 is the Proton acceptor of the active site. An activation loop region spans residues 154 to 183 (DFGLSALSQQVREDGLLHTTCGTPNYVAPE). In terms of domain architecture, NAF spans 306-331 (EERPSVMNAFELISTSQGLNLGTLFE). Residues 339 to 368 (KRETRFASRLPANEILSKIEAAAGPMGFNV) form a PPI region.

This sequence belongs to the protein kinase superfamily. CAMK Ser/Thr protein kinase family. SNF1 subfamily. Mn(2+) serves as cofactor.

It catalyses the reaction L-seryl-[protein] + ATP = O-phospho-L-seryl-[protein] + ADP + H(+). The enzyme catalyses L-threonyl-[protein] + ATP = O-phospho-L-threonyl-[protein] + ADP + H(+). CIPK serine-threonine protein kinases interact with CBL proteins. Binding of a CBL protein to the regulatory NAF domain of CIPK protein lead to the activation of the kinase in a calcium-dependent manner. In Oryza sativa subsp. japonica (Rice), this protein is CBL-interacting protein kinase 23 (CIPK23).